The primary structure comprises 431 residues: CinA-like protein (431 aa).

It belongs to the CinA family.

The sequence is that of CinA-like protein from Chlorobium luteolum (strain DSM 273 / BCRC 81028 / 2530) (Pelodictyon luteolum).